Reading from the N-terminus, the 1161-residue chain is Voltage-gated inwardly rectifying potassium channel KCNH2 (1161 aa).

Residues 1 to 405 lie on the Cytoplasmic side of the membrane; it reads MPVRRGHVAP…RIHRWTILHY (405 aa). Residues 17 to 88 enclose the PAS domain; that stretch reads TIIRKFEGQS…AAQIAQALLG (72 aa). The 53-residue stretch at 92 to 144 folds into the PAC domain; sequence RKVEIAFYRKDGSCFLCLVDVVPVKNEDGAVIMFILNFEVVMEKDMVGSPARD. The tract at residues 233–286 is disordered; sequence ALVGSCSPPPPVSAPGPHPSLRAHSLNPDASGSSCSLARTRSRESCASVRRASS. 2 positions are modified to phosphoserine: S239 and S245. A compositionally biased stretch (pro residues) spans 239 to 250; sequence SPPPPVSAPGPH. Residues 260 to 271 are compositionally biased toward polar residues; it reads PDASGSSCSLAR. Phosphoserine occurs at positions 285, 286, 322, and 353. Residues 406–426 traverse the membrane as a helical segment; sequence SPFKAVWDWLILLLVIYTAVF. The Extracellular portion of the chain corresponds to 427–452; that stretch reads TPYSAAFLLKETEEGPPAPECGYACQ. Residues 453–473 form a helical membrane-spanning segment; it reads PLAVVDLIVDIMFIVDILINF. The Cytoplasmic segment spans residues 474 to 497; the sequence is RTTYVNANEEVVSHPGRIAVHYFK. The chain crosses the membrane as a helical span at residues 498–518; that stretch reads GWFLIDMVAAIPFDLLIFGSG. Residues 519 to 522 are Extracellular-facing; sequence SEEL. Residues 523-543 form a helical; Voltage-sensor membrane-spanning segment; the sequence is IGLLKTARLLRLVRVARKLDR. Over 544–549 the chain is Cytoplasmic; that stretch reads YSEYGA. A helical membrane pass occupies residues 550 to 570; sequence AVLLLLMCTFALIAHWLACIW. Residues 571–613 are Extracellular-facing; that stretch reads YAIGNMEQPHMDSRIGWLHNLGDQMGKPYNSSGLGGPSIKDKY. Residue N600 is glycosylated (N-linked (GlcNAc...) asparagine). Positions 614–634 form an intramembrane region, pore-forming; the sequence is VTGLYFTFSSLTSVGFGNVSP. Positions 626-631 match the Selectivity filter motif; it reads SVGFGN. Residues 635–640 lie on the Extracellular side of the membrane; it reads NTNSEK. A helical membrane pass occupies residues 641-661; it reads IFSICVMLIGSLMYASIFGNV. Residues 662-1161 are Cytoplasmic-facing; that stretch reads SAIIQRLYSG…LHRHGSDPGS (500 aa). Residues 744 to 844 are cNMP-binding domain; it reads PFRGATKDCL…IHRDDLLEVL (101 aa). Positions 872–985 are disordered; sequence GSPGSTEWEG…TEDCEKSSDT (114 aa). S873 and S876 each carry phosphoserine. Residues 885–894 are compositionally biased toward basic residues; the sequence is RQRKRKLSFR. A compositionally biased stretch (low complexity) spans 930-941; that stretch reads GESPSSGPSSPE. Over residues 962–972 the composition is skewed to pro residues; the sequence is SPRPPGEPPGG. An Omega-N-methylarginine modification is found at R1016. The stretch at 1037–1064 forms a coiled coil; that stretch reads RGDVESRLDALQRQLNRLETRLSADMAT. A disordered region spans residues 1121–1161; it reads ELPPGAPELPQEGPTRRLSLPGQLGALTSQPLHRHGSDPGS. S1139 bears the Phosphoserine mark.

The protein belongs to the potassium channel family. H (Eag) (TC 1.A.1.20) subfamily. Kv11.1/KCNH2 sub-subfamily. As to quaternary structure, the potassium channel is probably composed of a homo- or heterotetrameric complex of pore-forming alpha subunits that can associate with modulating beta subunits. Interacts with DNAJB12 and DNAJB14; chaperones DNAJB12 and DNAJB14 promote tetramerization. Heteromultimer with KCNH6/ERG2 and KCNH7/ERG3. Interacts with ALG10B. Forms a stable complex with KCNE1 or KCNE2, and that this heteromultimerization regulates Inward rectifier potassium channel activity. Interacts with CANX. The core-glycosylated, but not the fully glycosylated form interacts with RNF207. Interacts with NDFIP1 and NDFIP2; this interaction decreases the cell membrane expression by targeting KCNH2, through interaction with NEDD4L, for the degradation through the multivesicular bodies (MVBs)-lysosomal pathway. In terms of processing, phosphorylated on serine and threonine residues. Phosphorylation by PKA inhibits ion conduction. In terms of tissue distribution, detected in heart, both in atrium and in left ventricle.

It localises to the cell membrane. It carries out the reaction K(+)(in) = K(+)(out). Functionally, pore-forming (alpha) subunit of voltage-gated inwardly rectifying potassium channel. Characterized by unusual gating kinetics by producing relatively small outward currents during membrane depolarization and large inward currents during subsequent repolarization which reflect a rapid inactivation during depolarization and quick recovery from inactivation but slow deactivation (closing) during repolarization. Channel properties are modulated by cAMP and subunit assembly. Forms a stable complex with KCNE1 or KCNE2, and that this heteromultimerization regulates inward rectifier potassium channel activity. In Oryctolagus cuniculus (Rabbit), this protein is Voltage-gated inwardly rectifying potassium channel KCNH2.